A 206-amino-acid polypeptide reads, in one-letter code: dTTP/UTP pyrophosphatase (206 aa).

Asp79 (proton acceptor) is an active-site residue.

The protein belongs to the Maf family. YhdE subfamily. A divalent metal cation serves as cofactor.

It is found in the cytoplasm. The enzyme catalyses dTTP + H2O = dTMP + diphosphate + H(+). It catalyses the reaction UTP + H2O = UMP + diphosphate + H(+). Its function is as follows. Nucleoside triphosphate pyrophosphatase that hydrolyzes dTTP and UTP. May have a dual role in cell division arrest and in preventing the incorporation of modified nucleotides into cellular nucleic acids. This Rhizobium etli (strain ATCC 51251 / DSM 11541 / JCM 21823 / NBRC 15573 / CFN 42) protein is dTTP/UTP pyrophosphatase.